A 163-amino-acid chain; its full sequence is Probable protein tyrosine phosphatase type IVA B (163 aa).

The region spanning 10-161 is the Tyrosine-protein phosphatase domain; that stretch reads TIIESSTHKF…YKASKKAGCK (152 aa). Cys-49 and Cys-104 are disulfide-bonded. Catalysis depends on Asp-70, which acts as the Proton donor. The active-site Phosphocysteine intermediate is Cys-104. 105–110 contacts phosphate; it reads IAGLGR. Residue Arg-110 coordinates substrate. Cys-160 carries the post-translational modification Cysteine methyl ester. The S-farnesyl cysteine moiety is linked to residue Cys-160. Residues 161–163 constitute a propeptide, removed in mature form; sequence KIM.

The protein belongs to the protein-tyrosine phosphatase family.

Its subcellular location is the membrane. The catalysed reaction is O-phospho-L-tyrosyl-[protein] + H2O = L-tyrosyl-[protein] + phosphate. In Dictyostelium discoideum (Social amoeba), this protein is Probable protein tyrosine phosphatase type IVA B.